Reading from the N-terminus, the 547-residue chain is Chaperonin GroEL (547 aa).

ATP is bound by residues 30-33 (TLGP), Lys-51, 87-91 (DGTTT), Gly-415, and Asp-496.

It belongs to the chaperonin (HSP60) family. As to quaternary structure, forms a cylinder of 14 subunits composed of two heptameric rings stacked back-to-back. Interacts with the co-chaperonin GroES.

It is found in the cytoplasm. The catalysed reaction is ATP + H2O + a folded polypeptide = ADP + phosphate + an unfolded polypeptide.. Its function is as follows. Together with its co-chaperonin GroES, plays an essential role in assisting protein folding. The GroEL-GroES system forms a nano-cage that allows encapsulation of the non-native substrate proteins and provides a physical environment optimized to promote and accelerate protein folding. This is Chaperonin GroEL from Mannheimia succiniciproducens (strain KCTC 0769BP / MBEL55E).